A 288-amino-acid chain; its full sequence is Stage IV sporulation protein FB (288 aa).

Over 1–10 (MNKWLDLILK) the chain is Mother cell cytoplasmic. A helical transmembrane segment spans residues 11–30 (IHVHPFLWIIAALGLLTGHM). Lysine 31 is a topological domain (forespore intermembrane space). The helical transmembrane segment at 32 to 56 (ALLCLLLIVLIHELGHAALAVFFSW) threads the bilayer. Histidine 43 is a binding site for Zn(2+). Residue glutamate 44 is part of the active site. Residue histidine 47 participates in Zn(2+) binding. Residues 57–83 (RIKRVFLLPFGGTVEVEEHGNRPLKEE) lie on the Mother cell cytoplasmic side of the membrane. The helical transmembrane segment at 84–105 (FAVIIAGPLQHIWLQFAAWMLA) threads the bilayer. Topologically, residues 106–126 (EVSVIHQHTFELFTFYNLSIL) are forespore intermembrane space. A helical transmembrane segment spans residues 127–146 (FVNLLPIWPLDGGKLLFLLF). Aspartate 137 contributes to the Zn(2+) binding site. Residues 147-161 (SKQLPFQKAHRLNLK) are Mother cell cytoplasmic-facing. A helical membrane pass occupies residues 162–178 (TSLCFCLLLGCWVLFVI). Proline 179 is a topological domain (forespore intermembrane space). Residues 180 to 199 (LQISAWVLFVFLAVSLFEEY) form a helical membrane-spanning segment. The Mother cell cytoplasmic portion of the chain corresponds to 200–288 (RQRHYIHVRF…SSMEELLLPY (89 aa)).

It belongs to the peptidase M50B family. As to quaternary structure, forms a complex with SpoIVFA and BofA localized in the mother-cell membrane surrounding the forespore. It depends on Zn(2+) as a cofactor.

Its subcellular location is the forespore outer membrane. In terms of biological role, implicated in the coupling of mother cell to forespore gene expression. Required for spore formation. Processes the pro-sigma K factor. This Bacillus subtilis (strain 168) protein is Stage IV sporulation protein FB (spoIVFB).